Consider the following 804-residue polypeptide: Exo-1,4-beta-xylosidase xlnD (804 aa).

An N-terminal signal peptide occupies residues 1-26 (MAHSMSRPVAATAAALLALALPQALA). Residues asparagine 29, asparagine 124, asparagine 148, asparagine 242, and asparagine 251 are each glycosylated (N-linked (GlcNAc...) asparagine). Residue aspartate 315 is part of the active site. 9 N-linked (GlcNAc...) asparagine glycosylation sites follow: asparagine 357, asparagine 390, asparagine 413, asparagine 444, asparagine 455, asparagine 573, asparagine 665, asparagine 696, and asparagine 718.

This sequence belongs to the glycosyl hydrolase 3 family.

Its subcellular location is the secreted. The catalysed reaction is Hydrolysis of (1-&gt;4)-beta-D-xylans, to remove successive D-xylose residues from the non-reducing termini.. Its pathway is glycan degradation; xylan degradation. Functionally, xylan 1,4-beta-xylosidase involved in the hydrolysis of xylan, a major structural heterogeneous polysaccharide found in plant biomass representing the second most abundant polysaccharide in the biosphere, after cellulose. The sequence is that of Exo-1,4-beta-xylosidase xlnD (xlnD) from Aspergillus awamori (Black koji mold).